A 282-amino-acid chain; its full sequence is Tryptophan 2,3-dioxygenase (282 aa).

Substrate contacts are provided by residues 51-55 (FIIQH), tyrosine 113, and arginine 117. Residue histidine 240 participates in heme binding. Threonine 254 contacts substrate.

The protein belongs to the tryptophan 2,3-dioxygenase family. Homotetramer. Heme is required as a cofactor.

It carries out the reaction L-tryptophan + O2 = N-formyl-L-kynurenine. It participates in amino-acid degradation; L-tryptophan degradation via kynurenine pathway; L-kynurenine from L-tryptophan: step 1/2. Its function is as follows. Heme-dependent dioxygenase that catalyzes the oxidative cleavage of the L-tryptophan (L-Trp) pyrrole ring and converts L-tryptophan to N-formyl-L-kynurenine. Catalyzes the oxidative cleavage of the indole moiety. This Polaromonas naphthalenivorans (strain CJ2) protein is Tryptophan 2,3-dioxygenase.